We begin with the raw amino-acid sequence, 257 residues long: Protein YIPF5 (257 aa).

Over 1-124 (MSGFDNFNTD…KASDGSIMNE (124 aa)) the chain is Cytoplasmic. A helical membrane pass occupies residues 125 to 145 (TDLAGPMVFCLAFGATLLLTG). Position 146 (Lys-146) is a topological domain, lumenal. A helical transmembrane segment spans residues 147–167 (IQFGYVYGISAIGCLGMYCLL). At 168–173 (NLMSMT) the chain is on the cytoplasmic side. The helical transmembrane segment at 174 to 194 (GVSFGCVASVLGYCLLPMIIL) threads the bilayer. The Lumenal segment spans residues 195 to 196 (SS). The chain crosses the membrane as a helical span at residues 197–217 (FGVIFSLQGIMGIILTAAIIG). The Cytoplasmic portion of the chain corresponds to 218 to 236 (WCSLSASKIFISALAMDGQ). The chain crosses the membrane as a helical span at residues 237–257 (QLLVAYPCALLYGVFALISVF).

It belongs to the YIP1 family.

It localises to the endoplasmic reticulum membrane. The protein localises to the golgi apparatus. It is found in the cis-Golgi network membrane. Functionally, plays a role in transport between endoplasmic reticulum and Golgi. This chain is Protein YIPF5 (yipf5), found in Danio rerio (Zebrafish).